Consider the following 183-residue polypeptide: Dual-action ribosomal maturation protein DarP (183 aa).

The disordered stretch occupies residues M1–V27. The segment covering V9 to E18 has biased composition (acidic residues).

It belongs to the DarP family.

It localises to the cytoplasm. Member of a network of 50S ribosomal subunit biogenesis factors which assembles along the 30S-50S interface, preventing incorrect 23S rRNA structures from forming. Promotes peptidyl transferase center (PTC) maturation. This Bordetella parapertussis (strain 12822 / ATCC BAA-587 / NCTC 13253) protein is Dual-action ribosomal maturation protein DarP.